Here is a 364-residue protein sequence, read N- to C-terminus: Dual-specificity RNA methyltransferase RlmN (364 aa).

The active-site Proton acceptor is the Glu-91. One can recognise a Radical SAM core domain in the interval 102–337 (GTLRITQCLS…AIIRKSKGQD (236 aa)). Residues Cys-109 and Cys-342 are joined by a disulfide bond. Positions 116, 120, and 123 each coordinate [4Fe-4S] cluster. S-adenosyl-L-methionine is bound by residues 169–170 (GE), Ser-201, 223–225 (SLH), and Asn-299. Residue Cys-342 is the S-methylcysteine intermediate of the active site.

This sequence belongs to the radical SAM superfamily. RlmN family. Requires [4Fe-4S] cluster as cofactor.

Its subcellular location is the cytoplasm. The enzyme catalyses adenosine(2503) in 23S rRNA + 2 reduced [2Fe-2S]-[ferredoxin] + 2 S-adenosyl-L-methionine = 2-methyladenosine(2503) in 23S rRNA + 5'-deoxyadenosine + L-methionine + 2 oxidized [2Fe-2S]-[ferredoxin] + S-adenosyl-L-homocysteine. It carries out the reaction adenosine(37) in tRNA + 2 reduced [2Fe-2S]-[ferredoxin] + 2 S-adenosyl-L-methionine = 2-methyladenosine(37) in tRNA + 5'-deoxyadenosine + L-methionine + 2 oxidized [2Fe-2S]-[ferredoxin] + S-adenosyl-L-homocysteine. Specifically methylates position 2 of adenine 2503 in 23S rRNA and position 2 of adenine 37 in tRNAs. m2A2503 modification seems to play a crucial role in the proofreading step occurring at the peptidyl transferase center and thus would serve to optimize ribosomal fidelity. In Nitratidesulfovibrio vulgaris (strain DP4) (Desulfovibrio vulgaris), this protein is Dual-specificity RNA methyltransferase RlmN.